Here is a 258-residue protein sequence, read N- to C-terminus: Protein UL24 homolog (258 aa).

Belongs to the herpesviridae UL24 family.

The protein resides in the virion. Its subcellular location is the host cytoplasm. It is found in the host nucleus. The protein localises to the host nucleolus. It localises to the host Golgi apparatus. Functionally, may participate in nuclear egress of viral particles. Plays a role in the dispersal of several host nucleolar proteins including NCL/nucleolin and NPM1. Since deletion of host NCL/nucleolin negatively impact on nuclear egress, UL24 supposedly acts on this process through its effect on host nucleoli. This Varicella-zoster virus (strain Dumas) (HHV-3) protein is Protein UL24 homolog.